Reading from the N-terminus, the 1437-residue chain is MTLPHSLGGAGDPRPPQAMEVHRLEHRQEEEQKEERQHSLRMGSSVRRRTFRSSEEEHEFSAADYALAAALALTASSELSWEAQLRRQTSAVELEERGQKRVGFGNDWERTEIAFLQTHRLLRQRRDWKTLRRRTEEKVQEAKELRELCYGRGPWFWIPLRSHAVWEHTTVLLTCTVQASPPPQVTWYKNDTRIDPRLFRAGKYRITNNYGLLSLEIRRCAIEDSATYTVRVKNAHGQASSFAKVLVRTYLGKDAGFDSEIFKRSTFGPSVEFTSVLKPVFAREKEPFSLSCLFSEDVLDAESIQWFRDGSLLRSSRRRKILYTDRQASLKVSCTYKEDEGLYMVRVPSPFGPREQSTYVLVRDAEAENPGAPGSPLNVRCLDVNRDCLILTWAPPSDTRGNPITAYTIERCQGESGEWIACHEAPGGTCRCPIQGLVEGQSYRFRVRAISRVGSSVPSKASELVVMGDHDAARRKTEIPFDLGNKITISTDAFEDTVTIPSPPTNVHASEIREAYVVLAWEEPSPRDRAPLTYSLEKSVIGSGTWEAISSESPVRSPRFAVLDLEKKKSYVFRVRAMNQYGLSDPSEPSEPIALRGPPATLPPPAQVQAFRDTQTSVSLTWDPVKDPELLGYYIYSRKVGTSEWQTVNNKPIQGTRFTVPGLRTGKEYEFCVRSVSEAGVGESSAATEPIRVKQALATPSAPYGFALLNCGKNEMVIGWKPPKRRGGGKILGYFLDQHDSEELDWHAVNQQPIPTRVCKVSDLHEGHFYEFRARAANWAGVGELSAPSSLFECKEWTMPQPGPPYDVRASEVRATSLVLQWEPPLYMGAGPVTGYHVSFQEEGSEQWKPVTPGPISGTHLRVSDLQPGKSYVFQVQAMNSAGLGQPSMPTDPVLLEDKPGAHEIEVGVDEEGFIYLAFEAPEAPDSSEFQWSKDYKGPLDPQRVKIEDKVNKSKVILKEPGLEDLGTYSVIVTDADEDISASHTLTEEELEKLKKLSHEIRNPVIKLISGWNIDILERGEVRLWLEVEKLSPAAELHLIFNNKEIFSSPNRKINFDREKGLVEVIIQNLSEEDKGSYTAQLQDGKAKNQITLTLVDDDFDKLLRKADAKRRDWKRKQGPYFERPLQWKVTEDCQVQLTCKVTNTKKETRFQWFFQRAEMPDGQYDPETGTGLLCIEELSKKDKGIYRAMVSDDRGEDDTILDLTGDALDAIFTELGRIGALSATPLKIQGTEEGIRIFSKVKYYNVEYMKTTWFHKDKRLESGDRIRTGTTLDEIWLHILDPKDSDKGKYTLEIAAGKEVRQLSTDLSGQAFEDAMAEHQRLKTLAIIEKNRAKVVRGLPDVATIMEDKTLCLTCIVSGDPTPEISWLKNDQPVTFLDRYRMEVRGTEVTITIEKVNSEDSGRYGVFVKNKYGSETGQVTISVFKHGDEPKELKSM.

Residues 1–49 (MTLPHSLGGAGDPRPPQAMEVHRLEHRQEEEQKEERQHSLRMGSSVRRR) form a disordered region. Positions 20 to 38 (EVHRLEHRQEEEQKEERQH) are enriched in basic and acidic residues. A coiled-coil region spans residues 120-149 (RLLRQRRDWKTLRRRTEEKVQEAKELRELC). 2 consecutive Ig-like C2-type domains span residues 154–246 (PWFW…AKVL) and 269–361 (PSVE…TYVL). 5 consecutive Fibronectin type-III domains span residues 375 to 469 (SPLN…VMGD), 503 to 598 (PPTN…LRGP), 604 to 696 (PPAQ…VKQA), 702 to 797 (APYG…CKEW), and 804 to 899 (PPYD…LEDK). Ig-like C2-type domains lie at 1120–1205 (PYFE…LDLT) and 1334–1423 (AKVV…VTIS).

As to quaternary structure, homodimer.

It is found in the cytoplasm. It localises to the myofibril. The protein localises to the sarcomere. The protein resides in the m line. In terms of biological role, may link the intermediate filament cytoskeleton to the M-disk of the myofibrils in striated muscle. The polypeptide is Myomesin-3 (MYOM3) (Homo sapiens (Human)).